Consider the following 125-residue polypeptide: Glucose-1-phosphate adenylyltransferase small subunit (125 aa).

This sequence belongs to the bacterial/plant glucose-1-phosphate adenylyltransferase family. As to quaternary structure, heterotetramer. Leaves.

Its subcellular location is the plastid. The protein localises to the chloroplast. The protein resides in the amyloplast. It carries out the reaction alpha-D-glucose 1-phosphate + ATP + H(+) = ADP-alpha-D-glucose + diphosphate. It functions in the pathway glycan biosynthesis; starch biosynthesis. Its activity is regulated as follows. Activated by 3'phosphoglycerate, inhibited by orthophosphate. Allosteric regulation. In terms of biological role, this protein plays a role in synthesis of starch. It catalyzes the synthesis of the activated glycosyl donor, ADP-glucose from Glc-1-P and ATP. This is Glucose-1-phosphate adenylyltransferase small subunit (GLG1) from Zea mays (Maize).